Here is a 330-residue protein sequence, read N- to C-terminus: Phenylalanine--tRNA ligase alpha subunit (330 aa).

E246 is a Mg(2+) binding site.

This sequence belongs to the class-II aminoacyl-tRNA synthetase family. Phe-tRNA synthetase alpha subunit type 1 subfamily. As to quaternary structure, tetramer of two alpha and two beta subunits. It depends on Mg(2+) as a cofactor.

The protein resides in the cytoplasm. The catalysed reaction is tRNA(Phe) + L-phenylalanine + ATP = L-phenylalanyl-tRNA(Phe) + AMP + diphosphate + H(+). The protein is Phenylalanine--tRNA ligase alpha subunit of Wolinella succinogenes (strain ATCC 29543 / DSM 1740 / CCUG 13145 / JCM 31913 / LMG 7466 / NCTC 11488 / FDC 602W) (Vibrio succinogenes).